A 90-amino-acid polypeptide reads, in one-letter code: Small ribosomal subunit protein uS15 (90 aa).

This sequence belongs to the universal ribosomal protein uS15 family. As to quaternary structure, part of the 30S ribosomal subunit. Forms a bridge to the 50S subunit in the 70S ribosome, contacting the 23S rRNA.

Functionally, one of the primary rRNA binding proteins, it binds directly to 16S rRNA where it helps nucleate assembly of the platform of the 30S subunit by binding and bridging several RNA helices of the 16S rRNA. In terms of biological role, forms an intersubunit bridge (bridge B4) with the 23S rRNA of the 50S subunit in the ribosome. In Campylobacter jejuni subsp. jejuni serotype O:6 (strain 81116 / NCTC 11828), this protein is Small ribosomal subunit protein uS15.